We begin with the raw amino-acid sequence, 1089 residues long: Carbamoyl phosphate synthase large chain (1089 aa).

A carboxyphosphate synthetic domain region spans residues 1–399; sequence MPKRTDIKSI…SIQKALCSLE (399 aa). Positions 127, 167, 173, 174, 206, 208, 213, 239, 240, 241, 283, and 297 each coordinate ATP. Residues 131–326 enclose the ATP-grasp 1 domain; sequence KECMKKIGMD…IAKVATLLAV (196 aa). Mg(2+)-binding residues include Q283, E297, and N299. Mn(2+) contacts are provided by Q283, E297, and N299. The interval 400-553 is oligomerization domain; it reads RSLSGFDRVK…NVSELTQSKN (154 aa). Residues 554–951 form a carbamoyl phosphate synthetic domain region; it reads DAKDKKEKKV…SYAKSQIASF (398 aa). In terms of domain architecture, ATP-grasp 2 spans 680–871; that stretch reads AEFITKLGIN…LAKVATRVMW (192 aa). ATP is bound by residues R716, Q755, L757, E762, G787, I788, H789, S790, Q830, and E842. Residues Q830, E842, and N844 each contribute to the Mg(2+) site. The Mn(2+) site is built by Q830, E842, and N844. Positions 952–1089 constitute an MGS-like domain; sequence NHLPEQGVVF…VKSLQEWLKS (138 aa). The allosteric domain stretch occupies residues 952-1089; the sequence is NHLPEQGVVF…VKSLQEWLKS (138 aa).

This sequence belongs to the CarB family. Composed of two chains; the small (or glutamine) chain promotes the hydrolysis of glutamine to ammonia, which is used by the large (or ammonia) chain to synthesize carbamoyl phosphate. Tetramer of heterodimers (alpha,beta)4. Requires Mg(2+) as cofactor. Mn(2+) is required as a cofactor.

It carries out the reaction hydrogencarbonate + L-glutamine + 2 ATP + H2O = carbamoyl phosphate + L-glutamate + 2 ADP + phosphate + 2 H(+). The enzyme catalyses hydrogencarbonate + NH4(+) + 2 ATP = carbamoyl phosphate + 2 ADP + phosphate + 2 H(+). It functions in the pathway amino-acid biosynthesis; L-arginine biosynthesis; carbamoyl phosphate from bicarbonate: step 1/1. It participates in pyrimidine metabolism; UMP biosynthesis via de novo pathway; (S)-dihydroorotate from bicarbonate: step 1/3. Its function is as follows. Large subunit of the glutamine-dependent carbamoyl phosphate synthetase (CPSase). CPSase catalyzes the formation of carbamoyl phosphate from the ammonia moiety of glutamine, carbonate, and phosphate donated by ATP, constituting the first step of 2 biosynthetic pathways, one leading to arginine and/or urea and the other to pyrimidine nucleotides. The large subunit (synthetase) binds the substrates ammonia (free or transferred from glutamine from the small subunit), hydrogencarbonate and ATP and carries out an ATP-coupled ligase reaction, activating hydrogencarbonate by forming carboxy phosphate which reacts with ammonia to form carbamoyl phosphate. The chain is Carbamoyl phosphate synthase large chain from Campylobacter jejuni subsp. jejuni serotype O:2 (strain ATCC 700819 / NCTC 11168).